A 120-amino-acid chain; its full sequence is NADH-ubiquinone oxidoreductase chain 3 (120 aa).

The next 3 membrane-spanning stretches (helical) occupy residues 10–30 (ILIL…LGYF), 62–82 (FYLV…LFPF), and 89–109 (MTLF…IGFI).

The protein belongs to the complex I subunit 3 family.

The protein resides in the mitochondrion membrane. The catalysed reaction is a ubiquinone + NADH + 5 H(+)(in) = a ubiquinol + NAD(+) + 4 H(+)(out). Functionally, core subunit of the mitochondrial membrane respiratory chain NADH dehydrogenase (Complex I) that is believed to belong to the minimal assembly required for catalysis. Complex I functions in the transfer of electrons from NADH to the respiratory chain. The immediate electron acceptor for the enzyme is believed to be ubiquinone. The sequence is that of NADH-ubiquinone oxidoreductase chain 3 (nad3) from Dictyostelium citrinum (Slime mold).